The sequence spans 151 residues: Small ribosomal subunit protein uS15 (151 aa).

It belongs to the universal ribosomal protein uS15 family.

The chain is Small ribosomal subunit protein uS15 (RPS13) from Pisum sativum (Garden pea).